The chain runs to 146 residues: Hemoglobin A/D subunit beta (146 aa).

One can recognise a Globin domain in the interval 2–146 (HWTSEEKQYI…VAHALALGYH (145 aa)). Positions 63 and 92 each coordinate heme b.

The protein belongs to the globin family. Hemoglobins A and D are heterotetramers of alpha-1, alpha-2 and two identical beta chains. Red blood cells.

Its function is as follows. Involved in oxygen transport from the lung to the various peripheral tissues. The protein is Hemoglobin A/D subunit beta of Aldabrachelys gigantea (Aldabra giant tortoise).